The primary structure comprises 682 residues: Potassium-transporting ATPase ATP-binding subunit (682 aa).

The next 4 helical transmembrane spans lie at 34 to 54 (PVMFIVWIGSLLTTCISIAMA), 62 to 82 (ALFSAAISGWLWVTVLFANFA), 219 to 239 (IALTILLIALTIVFLLATATL), and 254 to 274 (VLVALLVCLIPTTIGGLLSAI). The 4-aspartylphosphate intermediate role is filled by D307. ATP contacts are provided by residues D344, E348, 377 to 384 (FTAQSRMS), and K395. D518 and D522 together coordinate Mg(2+). Transmembrane regions (helical) follow at residues 588-608 (FAIIPAAFAATYPQLNALNIM), 616-636 (AILSAVIFNALIIVFLIPLAL), and 656-676 (IYGLGGLLVPFIGIKVIDLLL).

This sequence belongs to the cation transport ATPase (P-type) (TC 3.A.3) family. Type IA subfamily. As to quaternary structure, the system is composed of three essential subunits: KdpA, KdpB and KdpC.

The protein localises to the cell inner membrane. It carries out the reaction K(+)(out) + ATP + H2O = K(+)(in) + ADP + phosphate + H(+). Functionally, part of the high-affinity ATP-driven potassium transport (or Kdp) system, which catalyzes the hydrolysis of ATP coupled with the electrogenic transport of potassium into the cytoplasm. This subunit is responsible for energy coupling to the transport system and for the release of the potassium ions to the cytoplasm. The sequence is that of Potassium-transporting ATPase ATP-binding subunit from Shigella sonnei (strain Ss046).